Reading from the N-terminus, the 222-residue chain is UPF0758 protein Mpe_A2695 (222 aa).

Residues 100–222 form the MPN domain; that stretch reads VFDSPQAVKD…VVSFAERGLL (123 aa). Zn(2+) is bound by residues histidine 171, histidine 173, and aspartate 184. A JAMM motif motif is present at residues 171 to 184; that stretch reads HNHPSGVAEPSRAD.

Belongs to the UPF0758 family.

The chain is UPF0758 protein Mpe_A2695 from Methylibium petroleiphilum (strain ATCC BAA-1232 / LMG 22953 / PM1).